An 84-amino-acid chain; its full sequence is Small ribosomal subunit protein uS17 (84 aa).

Belongs to the universal ribosomal protein uS17 family. Part of the 30S ribosomal subunit.

In terms of biological role, one of the primary rRNA binding proteins, it binds specifically to the 5'-end of 16S ribosomal RNA. In Clostridium botulinum (strain Okra / Type B1), this protein is Small ribosomal subunit protein uS17.